The primary structure comprises 94 residues: Integration host factor subunit beta (94 aa).

This sequence belongs to the bacterial histone-like protein family. Heterodimer of an alpha and a beta chain.

This protein is one of the two subunits of integration host factor, a specific DNA-binding protein that functions in genetic recombination as well as in transcriptional and translational control. The protein is Integration host factor subunit beta of Pectobacterium atrosepticum (strain SCRI 1043 / ATCC BAA-672) (Erwinia carotovora subsp. atroseptica).